The primary structure comprises 140 residues: 3-hydroxyacyl-[acyl-carrier-protein] dehydratase FabZ (140 aa).

The active site involves histidine 47.

Belongs to the thioester dehydratase family. FabZ subfamily.

The protein resides in the cytoplasm. The catalysed reaction is a (3R)-hydroxyacyl-[ACP] = a (2E)-enoyl-[ACP] + H2O. In terms of biological role, involved in unsaturated fatty acids biosynthesis. Catalyzes the dehydration of short chain beta-hydroxyacyl-ACPs and long chain saturated and unsaturated beta-hydroxyacyl-ACPs. The sequence is that of 3-hydroxyacyl-[acyl-carrier-protein] dehydratase FabZ from Streptococcus pyogenes serotype M49 (strain NZ131).